Reading from the N-terminus, the 255-residue chain is Acetyl-coenzyme A carboxylase carboxyl transferase subunit alpha (255 aa).

The 235-residue stretch at 1 to 235 (MNIAKIVREA…KKELQTELAR (235 aa)) folds into the CoA carboxyltransferase C-terminal domain.

It belongs to the AccA family. Acetyl-CoA carboxylase is a heterohexamer composed of biotin carboxyl carrier protein (AccB), biotin carboxylase (AccC) and two subunits each of ACCase subunit alpha (AccA) and ACCase subunit beta (AccD).

The protein localises to the cytoplasm. It carries out the reaction N(6)-carboxybiotinyl-L-lysyl-[protein] + acetyl-CoA = N(6)-biotinyl-L-lysyl-[protein] + malonyl-CoA. Its pathway is lipid metabolism; malonyl-CoA biosynthesis; malonyl-CoA from acetyl-CoA: step 1/1. Component of the acetyl coenzyme A carboxylase (ACC) complex. First, biotin carboxylase catalyzes the carboxylation of biotin on its carrier protein (BCCP) and then the CO(2) group is transferred by the carboxyltransferase to acetyl-CoA to form malonyl-CoA. The protein is Acetyl-coenzyme A carboxylase carboxyl transferase subunit alpha of Streptococcus pneumoniae serotype 2 (strain D39 / NCTC 7466).